A 137-amino-acid chain; its full sequence is UPF0148 protein MJ0890 (137 aa).

This sequence belongs to the UPF0148 family.

The chain is UPF0148 protein MJ0890 from Methanocaldococcus jannaschii (strain ATCC 43067 / DSM 2661 / JAL-1 / JCM 10045 / NBRC 100440) (Methanococcus jannaschii).